Consider the following 590-residue polypeptide: Aspartate--tRNA ligase (590 aa).

Glutamate 172 is a binding site for L-aspartate. Positions 196–199 (QLFK) are aspartate. Residue arginine 218 coordinates L-aspartate. ATP is bound by residues 218-220 (RDE) and glutamine 227. Histidine 449 lines the L-aspartate pocket. Position 483 (glutamate 483) interacts with ATP. L-aspartate is bound at residue arginine 490. 535–538 (GLDR) lines the ATP pocket.

Belongs to the class-II aminoacyl-tRNA synthetase family. Type 1 subfamily. In terms of assembly, homodimer.

Its subcellular location is the cytoplasm. It catalyses the reaction tRNA(Asp) + L-aspartate + ATP = L-aspartyl-tRNA(Asp) + AMP + diphosphate. Functionally, catalyzes the attachment of L-aspartate to tRNA(Asp) in a two-step reaction: L-aspartate is first activated by ATP to form Asp-AMP and then transferred to the acceptor end of tRNA(Asp). The chain is Aspartate--tRNA ligase from Glaesserella parasuis serovar 5 (strain SH0165) (Haemophilus parasuis).